A 224-amino-acid chain; its full sequence is Ribose-5-phosphate isomerase A (224 aa).

Residues 26-29 (TGST), 81-84 (DGAD), and 94-97 (KGGG) each bind substrate. Glu103 (proton acceptor) is an active-site residue. Lys121 lines the substrate pocket.

The protein belongs to the ribose 5-phosphate isomerase family. In terms of assembly, homodimer.

The catalysed reaction is aldehydo-D-ribose 5-phosphate = D-ribulose 5-phosphate. The protein operates within carbohydrate degradation; pentose phosphate pathway; D-ribose 5-phosphate from D-ribulose 5-phosphate (non-oxidative stage): step 1/1. Functionally, catalyzes the reversible conversion of ribose-5-phosphate to ribulose 5-phosphate. This chain is Ribose-5-phosphate isomerase A, found in Listeria innocua serovar 6a (strain ATCC BAA-680 / CLIP 11262).